The chain runs to 1261 residues: AT-rich interactive domain-containing protein 4A (1261 aa).

A DNA-binding region spans residues 4-121 (ADEPAYLTVG…RHFAESETLD (118 aa)). 3 disordered regions span residues 142-169 (RGRR…DKRR), 273-310 (ESSS…LDPE), and 435-470 (APEM…PRGR). 2 stretches are compositionally biased toward acidic residues: residues 151–165 (TEDE…EEDE) and 276–289 (SSDD…EHEE). A compositionally biased stretch (basic and acidic residues) spans 290–299 (EKEKEAKKEE). The segment covering 300-310 (EELPEEELDPE) has biased composition (acidic residues). The 93-residue stretch at 309-401 (PEERDNFLQQ…YLYGFEEYCR (93 aa)) folds into the ARID domain. Residue Lys-481 forms a Glycyl lysine isopeptide (Lys-Gly) (interchain with G-Cter in SUMO2) linkage. Disordered regions lie at residues 498–582 (LENK…GTKV), 633–768 (WPLD…EAGD), and 842–953 (FSST…EDAM). Residues 512–522 (PAAKREHELLF) show a composition bias toward basic and acidic residues. Over residues 526 to 536 (STPKNKEKKIK) the composition is skewed to basic residues. A compositionally biased stretch (acidic residues) spans 541–551 (SERDSDEEEEK). The span at 552–564 (SQEREETESRCDS) shows a compositional bias: basic and acidic residues. The segment covering 565-574 (EGEDEEDDTE) has biased composition (acidic residues). The Tudor-knot domain maps to 579–631 (GTKVKVKYGRGKTQKIYEASIKSTEMDDGEILYLVHYYGWNVRYDEWVKADRI). A compositionally biased stretch (basic residues) spans 640-649 (PKKKQKKKVK). A compositionally biased stretch (basic and acidic residues) spans 650-665 (NKEDSEKDEKRDEERQ). The segment covering 676-689 (STFSPNMPYSLSKT) has biased composition (polar residues). Ser-679 is subject to Phosphoserine. Residues 690 to 702 (SNSEGKSDSCSSD) show a composition bias toward low complexity. Residues 708–753 (QLEKSSGGEDLSPDVKEELEKNENAHDDKLDEENPKIVHISKENDR) are compositionally biased toward basic and acidic residues. Position 719 is a phosphoserine (Ser-719). Glycyl lysine isopeptide (Lys-Gly) (interchain with G-Cter in SUMO2) cross-links involve residues Lys-723 and Lys-743. Phosphoserine is present on Ser-867. Composition is skewed to basic and acidic residues over residues 899–909 (KGAHVEQHFET) and 929–947 (TSEK…TPLK). The tract at residues 955 to 968 (LIGPETLVCHEVDL) is retinoblastoma protein binding. Over residues 1067 to 1080 (HERESREKGQKRPS) the composition is skewed to basic and acidic residues. 2 disordered regions span residues 1067–1173 (HERE…RTYK) and 1216–1261 (RRRK…VECR). Residues Ser-1113 and Ser-1149 each carry the phosphoserine modification. Low complexity predominate over residues 1230-1252 (HAGASMSSASSDTGMSPSSSSPP).

In terms of assembly, identified in mSin3A corepressor complexes together with SIN3A, SIN3B, RBBP4, RBBP7, SAP30, BRMS1, HDAC1 and HDAC2. Interacts with BRMS1. Interacts with RB1. Interacts with ARID4B. Interacts with AR. In terms of tissue distribution, expressed in Sertoli cells of the testis.

The protein resides in the nucleus. DNA-binding protein which modulates activity of several transcription factors including RB1 (retinoblastoma-associated protein) and AR (androgen receptor). May function as part of an mSin3A repressor complex. Has no intrinsic transcriptional activity. Plays a role in the regulation of epigenetic modifications at the PWS/AS imprinting center near the SNRPN promoter, where it might function as part of a complex with RB1 and ARID4B. Involved in spermatogenesis, together with ARID4B, where it acts as a transcriptional coactivator for AR and enhances expression of genes required for sperm maturation. Regulates expression of the tight junction protein CLDN3 in the testis, which is important for integrity of the blood-testis barrier. Plays a role in myeloid homeostasis where it regulates the histone methylation state of bone marrow cells and expression of various genes involved in hematopoiesis. May function as a leukemia suppressor. The sequence is that of AT-rich interactive domain-containing protein 4A from Mus musculus (Mouse).